Consider the following 387-residue polypeptide: MIKSAILVLEDGTQFHGRAIGAEGAAVGEVVFNTSMTGYQEILTDPSYSRQIVTLTYPHIGNVGVNSVDKESLKVQAQGLVIRDLPLLTSNFRCEETLSDYLKRHNIVAIADIDTRKLTRLLREKGSQNGCIIAGKQIDAQVALEKAQAFPGLEGMDLAKEVTTKQIYPWLQGSWKLAGGLPEDKQEQDLPYHVVAYDFGAKRNILRMLVDRGCRLTVVPAQTSAEDVLKLNPDGIFLSNGPGDPAPCGYAIDAVKTLLETEIPIFGICLGHQLLALASGAETMKMKFGHHGGNHPVKDLECNVVMITAQNHGFAVDEKSLPSNLRVTHKSLFDGTLQGIHRTDKPAFSFQGHPEASPGPHETASLFDHFIELIEQYCQKNNRHNTK.

Residues 1 to 189 form a CPSase region; that stretch reads MIKSAILVLE…GLPEDKQEQD (189 aa). L-glutamine contacts are provided by S47, G241, and G243. The 188-residue stretch at 193–380 folds into the Glutamine amidotransferase type-1 domain; that stretch reads HVVAYDFGAK…IELIEQYCQK (188 aa). The active-site Nucleophile is the C269. L-glutamine-binding residues include L270, Q273, N311, G313, and F314. Active-site residues include H353 and E355.

It belongs to the CarA family. Composed of two chains; the small (or glutamine) chain promotes the hydrolysis of glutamine to ammonia, which is used by the large (or ammonia) chain to synthesize carbamoyl phosphate. Tetramer of heterodimers (alpha,beta)4.

The catalysed reaction is hydrogencarbonate + L-glutamine + 2 ATP + H2O = carbamoyl phosphate + L-glutamate + 2 ADP + phosphate + 2 H(+). It catalyses the reaction L-glutamine + H2O = L-glutamate + NH4(+). It functions in the pathway amino-acid biosynthesis; L-arginine biosynthesis; carbamoyl phosphate from bicarbonate: step 1/1. Its pathway is pyrimidine metabolism; UMP biosynthesis via de novo pathway; (S)-dihydroorotate from bicarbonate: step 1/3. Its function is as follows. Small subunit of the glutamine-dependent carbamoyl phosphate synthetase (CPSase). CPSase catalyzes the formation of carbamoyl phosphate from the ammonia moiety of glutamine, carbonate, and phosphate donated by ATP, constituting the first step of 2 biosynthetic pathways, one leading to arginine and/or urea and the other to pyrimidine nucleotides. The small subunit (glutamine amidotransferase) binds and cleaves glutamine to supply the large subunit with the substrate ammonia. In Photorhabdus laumondii subsp. laumondii (strain DSM 15139 / CIP 105565 / TT01) (Photorhabdus luminescens subsp. laumondii), this protein is Carbamoyl phosphate synthase small chain.